The following is a 483-amino-acid chain: Glutamyl-tRNA(Gln) amidotransferase subunit A (483 aa).

Active-site charge relay system residues include lysine 77 and serine 152. Serine 176 acts as the Acyl-ester intermediate in catalysis.

The protein belongs to the amidase family. GatA subfamily. Heterotrimer of A, B and C subunits.

The catalysed reaction is L-glutamyl-tRNA(Gln) + L-glutamine + ATP + H2O = L-glutaminyl-tRNA(Gln) + L-glutamate + ADP + phosphate + H(+). Its function is as follows. Allows the formation of correctly charged Gln-tRNA(Gln) through the transamidation of misacylated Glu-tRNA(Gln) in organisms which lack glutaminyl-tRNA synthetase. The reaction takes place in the presence of glutamine and ATP through an activated gamma-phospho-Glu-tRNA(Gln). The protein is Glutamyl-tRNA(Gln) amidotransferase subunit A of Listeria monocytogenes serotype 4b (strain CLIP80459).